The chain runs to 387 residues: 3-ketoacyl-CoA thiolase (387 aa).

The active-site Acyl-thioester intermediate is the C91. Catalysis depends on proton acceptor residues H343 and C373.

It belongs to the thiolase-like superfamily. Thiolase family. Heterotetramer of two alpha chains (FadB) and two beta chains (FadA).

Its subcellular location is the cytoplasm. The enzyme catalyses an acyl-CoA + acetyl-CoA = a 3-oxoacyl-CoA + CoA. The protein operates within lipid metabolism; fatty acid beta-oxidation. In terms of biological role, catalyzes the final step of fatty acid oxidation in which acetyl-CoA is released and the CoA ester of a fatty acid two carbons shorter is formed. The protein is 3-ketoacyl-CoA thiolase of Salmonella paratyphi A (strain ATCC 9150 / SARB42).